A 95-amino-acid polypeptide reads, in one-letter code: CRISPR-associated endoribonuclease Cas2 1 (95 aa).

D11 serves as a coordination point for Mg(2+).

Belongs to the CRISPR-associated endoribonuclease Cas2 protein family. In terms of assembly, homodimer, forms a heterotetramer with a Cas1 homodimer. The cofactor is Mg(2+).

In terms of biological role, CRISPR (clustered regularly interspaced short palindromic repeat), is an adaptive immune system that provides protection against mobile genetic elements (viruses, transposable elements and conjugative plasmids). CRISPR clusters contain sequences complementary to antecedent mobile elements and target invading nucleic acids. CRISPR clusters are transcribed and processed into CRISPR RNA (crRNA). Functions as a ssRNA-specific endoribonuclease. Involved in the integration of spacer DNA into the CRISPR cassette. The protein is CRISPR-associated endoribonuclease Cas2 1 of Methanospirillum hungatei JF-1 (strain ATCC 27890 / DSM 864 / NBRC 100397 / JF-1).